The chain runs to 475 residues: Sulfate adenylyltransferase subunit 1 (475 aa).

The 215-residue stretch at 25–239 (KSLLRFLTCG…EVLETVEIQR (215 aa)) folds into the tr-type G domain. A G1 region spans residues 34–41 (GSVDDGKS). 34–41 (GSVDDGKS) lines the GTP pocket. The tract at residues 92–96 (GITID) is G2. Positions 113–116 (DTPG) are G3. GTP is bound by residues 113-117 (DTPGH) and 168-171 (NKMD). The G4 stretch occupies residues 168–171 (NKMD). The tract at residues 206–208 (SAL) is G5.

Belongs to the TRAFAC class translation factor GTPase superfamily. Classic translation factor GTPase family. CysN/NodQ subfamily. Heterodimer composed of CysD, the smaller subunit, and CysN.

It carries out the reaction sulfate + ATP + H(+) = adenosine 5'-phosphosulfate + diphosphate. Its pathway is sulfur metabolism; hydrogen sulfide biosynthesis; sulfite from sulfate: step 1/3. Its function is as follows. With CysD forms the ATP sulfurylase (ATPS) that catalyzes the adenylation of sulfate producing adenosine 5'-phosphosulfate (APS) and diphosphate, the first enzymatic step in sulfur assimilation pathway. APS synthesis involves the formation of a high-energy phosphoric-sulfuric acid anhydride bond driven by GTP hydrolysis by CysN coupled to ATP hydrolysis by CysD. The sequence is that of Sulfate adenylyltransferase subunit 1 from Escherichia fergusonii (strain ATCC 35469 / DSM 13698 / CCUG 18766 / IAM 14443 / JCM 21226 / LMG 7866 / NBRC 102419 / NCTC 12128 / CDC 0568-73).